Reading from the N-terminus, the 394-residue chain is C-19 steroid 1alpha-hydroxylase (394 aa).

Heme b is bound by residues H81, R85, R281, G335, H338, and C340.

The protein belongs to the cytochrome P450 family. Heme b is required as a cofactor.

The enzyme catalyses testosterone + 2 reduced [2Fe-2S]-[ferredoxin] + O2 + 2 H(+) = 1alpha-hydroxytestosterone + 2 oxidized [2Fe-2S]-[ferredoxin] + H2O. It carries out the reaction androst-4-ene-3,17-dione + 2 reduced [2Fe-2S]-[ferredoxin] + O2 + 2 H(+) = 1alpha-hydroxyandrost-4-ene-3,17-dione + 2 oxidized [2Fe-2S]-[ferredoxin] + H2O. Hydroxylase that can catalyze the in vitro conversion of the sesquiterpenoid nootkatone, a natural organic compound produced by some plants, to at least five hydrophilic products. The native ferredoxin reductase FdR_B and either Fdx2 or Fdx8 ferredoxins can act as the redox partners for the conversion of nootkatone. Its function is as follows. In addition, acts as a steroid 1alpha-hydroxylase, when associated in vitro with the surrogate redox partners bovine adrenodoxin (Adx) and adrenodoxin reductase (Adr). Acts on several C-19 steroid substrates, including testosterone and androstenedione, which are hydroxylated to 1alpha-hydroxytestosterone and 1alpha-hydroxyandrostenedione, respectively. Can use their derivatives testosterone-acetate and 11-oxoandrostenedione, but not vitamin D3 and 25-hydroxyvitamin D3. Also catalyzes the hydroxylation of the C-21 steroid 11-deoxycorticosterone to 1alpha-hydroxy-11-deoxycorticosterone. Catalyzes the hydroxylation of the C-21 steroid progesterone, leading to the formation of seven products: two major (1alpha-hydroxyprogesterone and 17alpha-hydroxyprogesterone) and five minor products. This chain is C-19 steroid 1alpha-hydroxylase, found in Sorangium cellulosum (strain So ce56) (Polyangium cellulosum (strain So ce56)).